A 1050-amino-acid chain; its full sequence is RecBCD enzyme subunit RecB (1050 aa).

One can recognise a UvrD-like helicase ATP-binding domain in the interval 1 to 443 (MKPFNIFDSN…LQLVNNYRST (443 aa)). Positions 1–766 (MKPFNIFDSN…TNYVKLEGTQ (766 aa)) are DNA-binding and helicase activity, interacts with RecC. 21-28 (ASAGTGKT) contacts ATP. One can recognise a UvrD-like helicase C-terminal domain in the interval 458 to 701 (SPFLEIPGYL…KITTIHSSKG (244 aa)). The segment at 814 to 1050 (PKTIFSFSST…KAIQKCQAYH (237 aa)) is nuclease activity, interacts with RecD and RecA. Mg(2+) contacts are provided by His-859, Asp-945, and Asp-958. Asp-958 serves as the catalytic For nuclease activity.

This sequence belongs to the helicase family. UvrD subfamily. As to quaternary structure, heterotrimer of RecB, RecC and RecD. All subunits contribute to DNA-binding. Interacts with RecA. Requires Mg(2+) as cofactor.

The catalysed reaction is Exonucleolytic cleavage (in the presence of ATP) in either 5'- to 3'- or 3'- to 5'-direction to yield 5'-phosphooligonucleotides.. It catalyses the reaction Couples ATP hydrolysis with the unwinding of duplex DNA by translocating in the 3'-5' direction.. It carries out the reaction ATP + H2O = ADP + phosphate + H(+). Functionally, a helicase/nuclease that prepares dsDNA breaks (DSB) for recombinational DNA repair. Binds to DSBs and unwinds DNA via a highly rapid and processive ATP-dependent bidirectional helicase activity. Unwinds dsDNA until it encounters a Chi (crossover hotspot instigator) sequence from the 3' direction. Cuts ssDNA a few nucleotides 3' to the Chi site. The properties and activities of the enzyme are changed at Chi. The Chi-altered holoenzyme produces a long 3'-ssDNA overhang and facilitates RecA-binding to the ssDNA for homologous DNA recombination and repair. Holoenzyme degrades any linearized DNA that is unable to undergo homologous recombination. In the holoenzyme this subunit contributes ATPase, 3'-5' helicase, exonuclease activity and loads RecA onto ssDNA. This is RecBCD enzyme subunit RecB from Chlamydia pneumoniae (Chlamydophila pneumoniae).